The following is a 175-amino-acid chain: Peptide deformylase (175 aa).

Cys-96 and His-138 together coordinate Fe cation. The active site involves Glu-139. His-142 serves as a coordination point for Fe cation.

It belongs to the polypeptide deformylase family. Fe(2+) is required as a cofactor.

It carries out the reaction N-terminal N-formyl-L-methionyl-[peptide] + H2O = N-terminal L-methionyl-[peptide] + formate. Functionally, removes the formyl group from the N-terminal Met of newly synthesized proteins. Requires at least a dipeptide for an efficient rate of reaction. N-terminal L-methionine is a prerequisite for activity but the enzyme has broad specificity at other positions. This Campylobacter jejuni subsp. jejuni serotype O:2 (strain ATCC 700819 / NCTC 11168) protein is Peptide deformylase.